A 266-amino-acid polypeptide reads, in one-letter code: MVKAKKQYGQNFLIDKSVLAKIIQAIPKEMNNIIEIGPGLGDLTQELLKISQVKAYEIDNDLIPILKKKFQKELECGKFNLIHQDASEAFNPSLDEKPYFLVANLPYYVASHIILKALEDKNCLGLIVMVQREMAEKFCAKEGNSEFSSLGVLSAMICERKILFDVDPQCFNPPPKVMSAVMSLIKTKDFDELCEIENFKNFLKDCFKAPRKQLLGNLKTYKAKVLEVLSTLGLKENIRPHEICVDLYLKIYDKLKDEYGRKQRDK.

Positions 11, 13, 37, 57, 85, and 104 each coordinate S-adenosyl-L-methionine.

Belongs to the class I-like SAM-binding methyltransferase superfamily. rRNA adenine N(6)-methyltransferase family. RsmA subfamily.

The protein localises to the cytoplasm. The catalysed reaction is adenosine(1518)/adenosine(1519) in 16S rRNA + 4 S-adenosyl-L-methionine = N(6)-dimethyladenosine(1518)/N(6)-dimethyladenosine(1519) in 16S rRNA + 4 S-adenosyl-L-homocysteine + 4 H(+). In terms of biological role, specifically dimethylates two adjacent adenosines (A1518 and A1519) in the loop of a conserved hairpin near the 3'-end of 16S rRNA in the 30S particle. May play a critical role in biogenesis of 30S subunits. In Campylobacter jejuni (strain RM1221), this protein is Ribosomal RNA small subunit methyltransferase A.